The chain runs to 313 residues: tRNA-cytidine(32) 2-sulfurtransferase (313 aa).

The PP-loop motif signature appears at 47–52 (SGGKDS). [4Fe-4S] cluster-binding residues include cysteine 122, cysteine 125, and cysteine 213.

The protein belongs to the TtcA family. Homodimer. The cofactor is Mg(2+). [4Fe-4S] cluster serves as cofactor.

Its subcellular location is the cytoplasm. The enzyme catalyses cytidine(32) in tRNA + S-sulfanyl-L-cysteinyl-[cysteine desulfurase] + AH2 + ATP = 2-thiocytidine(32) in tRNA + L-cysteinyl-[cysteine desulfurase] + A + AMP + diphosphate + H(+). The protein operates within tRNA modification. Catalyzes the ATP-dependent 2-thiolation of cytidine in position 32 of tRNA, to form 2-thiocytidine (s(2)C32). The sulfur atoms are provided by the cysteine/cysteine desulfurase (IscS) system. The sequence is that of tRNA-cytidine(32) 2-sulfurtransferase from Yersinia pseudotuberculosis serotype IB (strain PB1/+).